The chain runs to 122 residues: Proteasome assembly chaperone 3 (122 aa).

M1 is modified (N-acetylmethionine).

It belongs to the PSMG3 family. Homodimer. Interacts with PSMG4. Interacts directly with alpha and beta subunits of the 20S proteasome but dissociates before the formation of half-proteasomes, probably upon recruitment of POMP.

Functionally, chaperone protein which promotes assembly of the 20S proteasome. May cooperate with PSMG1-PSMG2 heterodimers to orchestrate the correct assembly of proteasomes. This chain is Proteasome assembly chaperone 3, found in Homo sapiens (Human).